The sequence spans 121 residues: Small ribosomal subunit protein uS13 (121 aa).

The disordered stretch occupies residues 93–121 (RGLPMRGQRTRTNARTRKGPRKAAQSLKK).

The protein belongs to the universal ribosomal protein uS13 family. In terms of assembly, part of the 30S ribosomal subunit. Forms a loose heterodimer with protein S19. Forms two bridges to the 50S subunit in the 70S ribosome.

In terms of biological role, located at the top of the head of the 30S subunit, it contacts several helices of the 16S rRNA. In the 70S ribosome it contacts the 23S rRNA (bridge B1a) and protein L5 of the 50S subunit (bridge B1b), connecting the 2 subunits; these bridges are implicated in subunit movement. Contacts the tRNAs in the A and P-sites. The polypeptide is Small ribosomal subunit protein uS13 (Albidiferax ferrireducens (strain ATCC BAA-621 / DSM 15236 / T118) (Rhodoferax ferrireducens)).